Reading from the N-terminus, the 246-residue chain is MRVKVIDADAFSYIFRTLEEFIDEITLDFTSDGLKIRGIDPSRVTFIDILIPAGYFEEYNVEKEEKVGVKLEDFTDVLKTVTKNDSLYLETDENQNIKVTLDGVYERTFTFPSIVASEIETPNLNLEFPFKAKALTVTFTDIIDEIEDIGGDSITFKAEGGKLYLSANSDMGSSTIELSTENGGLLESEGGDAESVYGLEYVVNTSKMRKPSDTVEIAFGSQIPLKLRYNLPQGGYADFYIAPRAE.

It belongs to the PCNA family. The subunits circularize to form a toroid; DNA passes through its center. Replication factor C (RFC) is required to load the toroid on the DNA. Forms dimeric complexes with PCNA1 and PCNA2, and trimeric complexes with PCNA123 and PCNA323; does not form homotrimers. Crystal structures show a heterotetramer of 2 PCNA2 and 2 PCNA3, which would be large enough to clamp a Holliday junction.

Functionally, sliding clamp subunit that acts as a moving platform for DNA processing. Responsible for tethering the catalytic subunit of DNA polymerase and other proteins to DNA during high-speed replication. Both trimeric complexes inhibit DNA ligase and both 3'-5' and 5'-3' activity of Hel308 (Hjm) helicase, but stimulate Hjc, the Holliday junction cleavage enzyme. This chain is DNA polymerase sliding clamp 3, found in Sulfurisphaera tokodaii (strain DSM 16993 / JCM 10545 / NBRC 100140 / 7) (Sulfolobus tokodaii).